The sequence spans 407 residues: E3 ubiquitin-protein ligase TRIM13 (407 aa).

The segment at 10–58 adopts an RING-type zinc-finger fold; sequence CPICCSLFDDPRVLPCSHNFCKKCLEGILEGNVRNSLWRSSPFKCPTCR. Residues 89–131 form a B box-type zinc finger; it reads PKMPVCKGHLGQPLNIFCLTDMQLICGICATRGEHTKHVFCSI. Residues Cys94, His97, Cys117, and His123 each coordinate Zn(2+). A coiled-coil region spans residues 172 to 200; that stretch reads LQLLTKDSDKVKEFFEKLQYTLDQKKNEI. Residues 316–336 traverse the membrane as a helical segment; sequence PLFVVVILLGLLIFFSPTMFL.

As to quaternary structure, interacts (via C-terminal domain) with VCP. Interacts with AKT1; the interaction ubiquitinates AKT1 and leads to its proteasomal degradation. Interacts with MDM2; the interaction ubiquitinates AKT1 and leads to its proteasomal degradation. Interacts with p62/SQSTM1. Interacts with TRAF6. Interacts with IKBKG/NEMO. Auto-ubiquitinated; requires the RING-type zinc finger. Auto-polyubiquitination leads to proteasomal degradation.

The protein localises to the endoplasmic reticulum membrane. It catalyses the reaction S-ubiquitinyl-[E2 ubiquitin-conjugating enzyme]-L-cysteine + [acceptor protein]-L-lysine = [E2 ubiquitin-conjugating enzyme]-L-cysteine + N(6)-ubiquitinyl-[acceptor protein]-L-lysine.. It participates in protein modification; protein ubiquitination. In terms of biological role, endoplasmic reticulum (ER) membrane anchored E3 ligase involved in the retrotranslocation and turnover of membrane and secretory proteins from the ER through a set of processes named ER-associated degradation (ERAD). This process acts on misfolded proteins as well as in the regulated degradation of correctly folded proteins. Enhances ionizing radiation-induced p53/TP53 stability and apoptosis via ubiquitinating MDM2 and AKT1 and decreasing AKT1 kinase activity through MDM2 and AKT1 proteasomal degradation. Regulates ER stress-induced autophagy, and may act as a tumor suppressor. Also plays a role in innate immune response by stimulating NF-kappa-B activity in the TLR2 signaling pathway. Ubiquitinates TRAF6 via the 'Lys-29'-linked polyubiquitination chain resulting in NF-kappa-B activation. Participates as well in T-cell receptor-mediated NF-kappa-B activation. In the presence of TNF, modulates the IKK complex by regulating IKBKG/NEMO ubiquitination leading to the repression of NF-kappa-B. This chain is E3 ubiquitin-protein ligase TRIM13 (TRIM13), found in Bos taurus (Bovine).